A 454-amino-acid chain; its full sequence is L-cysteine desulfhydrase (454 aa).

A disordered region spans residues methionine 1–alanine 25. A compositionally biased stretch (basic residues) spans histidine 14–arginine 23. Lysine 257 carries the post-translational modification N6-(pyridoxal phosphate)lysine.

Belongs to the class-V pyridoxal-phosphate-dependent aminotransferase family. Requires pyridoxal 5'-phosphate as cofactor. Highly expressed in stems and cauline leaves, and at lower levels in roots, rosette leaves and flowers.

The enzyme catalyses L-cysteine + H2O = hydrogen sulfide + pyruvate + NH4(+) + H(+). Its function is as follows. Catalyzes the production of hydrogen sulfide (H2S) from cysteine. Is mainly responsible for the degradation of cysteine to generate H2S, a regulator of stomatal movement and closure. This is L-cysteine desulfhydrase (LCD) from Arabidopsis thaliana (Mouse-ear cress).